Reading from the N-terminus, the 599-residue chain is Serine/threonine-protein kinase Nek1 (599 aa).

The region spanning 4 to 258 (YEVLEQIGKG…AAELLKHPHL (255 aa)) is the Protein kinase domain. ATP is bound by residues 10-18 (IGKGAFGSA) and Lys-33. Asp-129 acts as the Proton acceptor in catalysis. Disordered stretches follow at residues 364 to 386 (SIVKTPKRTPSKTITTPQLEPPK), 461 to 482 (SEDPPFLKLHGRRSPTPTPQHC), and 504 to 542 (DDDDGRSDSSSGRNNAAAAASSRAGSSESTRQRRFDTSS). The segment covering 511 to 530 (DSSSGRNNAAAAASSRAGSS) has biased composition (low complexity).

This sequence belongs to the protein kinase superfamily. NEK Ser/Thr protein kinase family. NIMA subfamily. Expressed in anthers, pistils and leaves.

The catalysed reaction is L-seryl-[protein] + ATP = O-phospho-L-seryl-[protein] + ADP + H(+). The enzyme catalyses L-threonyl-[protein] + ATP = O-phospho-L-threonyl-[protein] + ADP + H(+). Its function is as follows. May be involved in plant development processes. This Oryza sativa subsp. japonica (Rice) protein is Serine/threonine-protein kinase Nek1.